We begin with the raw amino-acid sequence, 201 residues long: Small ribosomal subunit protein uS5 (201 aa).

The disordered stretch occupies residues 1–27 (MAGPQRRGSGAGGGERRDRKGRDGGAA). Over residues 14–23 (GERRDRKGRD) the composition is skewed to basic and acidic residues. The S5 DRBM domain occupies 34 to 97 (YVERVVAINR…EEAKKHFFKV (64 aa)).

It belongs to the universal ribosomal protein uS5 family. Part of the 30S ribosomal subunit. Contacts proteins S4 and S8.

With S4 and S12 plays an important role in translational accuracy. Functionally, located at the back of the 30S subunit body where it stabilizes the conformation of the head with respect to the body. This Streptomyces avermitilis (strain ATCC 31267 / DSM 46492 / JCM 5070 / NBRC 14893 / NCIMB 12804 / NRRL 8165 / MA-4680) protein is Small ribosomal subunit protein uS5.